A 494-amino-acid polypeptide reads, in one-letter code: DnaJ homolog subfamily C member 7 (494 aa).

Ala2 carries the post-translational modification N-acetylalanine. TPR repeat units follow at residues 28-61 (AETF…CPKN), 62-95 (ASYY…DDSF), 96-129 (VRGH…DHKN), 142-175 (VMEY…APAC), 177-209 (RFKI…DSTN), 210-243 (ADAL…APDH), 256-289 (LKAK…DPNN), 294-327 (AKLY…DDTY), and 328-361 (IKAY…EKTK). The J domain maps to 381–451 (DYYKILGVDK…KKKTRYDSGQ (71 aa)). Residue Ser393 is modified to Phosphoserine.

As to quaternary structure, associates with complexes containing chaperones HSP70 and HSP90. Interacts with the GAP domain of NF1. Interacts with HSP90AA1. Interacts with HSPA1A/B; the interaction is enhanced by ATP. Interacts with HSP90AB1. Interacts with PGR. Interacts with RAD9A; the interaction is interrupted by UV and heat shock treatments. Interacts with HUS1 and RAD1. Interacts with NR1I3. The DNAJC7-NR1I3 complex may also include HSP90. Interacts with HSPA8.

It localises to the cytoplasm. It is found in the nucleus. The protein localises to the cytoskeleton. Functionally, acts as a co-chaperone regulating the molecular chaperones HSP70 and HSP90 in folding of steroid receptors, such as the glucocorticoid receptor and the progesterone receptor. Proposed to act as a recycling chaperone by facilitating the return of chaperone substrates to early stages of chaperoning if further folding is required. In vitro, induces ATP-independent dissociation of HSP90 but not of HSP70 from the chaperone-substrate complexes. Recruits NR1I3 to the cytoplasm. In Homo sapiens (Human), this protein is DnaJ homolog subfamily C member 7 (DNAJC7).